Reading from the N-terminus, the 299-residue chain is GTPase Era (299 aa).

In terms of domain architecture, Era-type G spans 4–171 (KSGFVAILGR…VDILSENLDE (168 aa)). The interval 12-19 (GRPNVGKS) is G1. 12–19 (GRPNVGKS) is a GTP binding site. Residues 38–42 (QTTRN) are G2. The G3 stretch occupies residues 59–62 (DTPG). Residues 59-63 (DTPGI) and 121-124 (NKID) each bind GTP. The tract at residues 121 to 124 (NKID) is G4. The interval 150-152 (ISA) is G5. Residues 202–280 (TREEIPHSVA…FLETWVKVKK (79 aa)) enclose the KH type-2 domain.

The protein belongs to the TRAFAC class TrmE-Era-EngA-EngB-Septin-like GTPase superfamily. Era GTPase family. Monomer.

The protein resides in the cytoplasm. The protein localises to the cell membrane. Functionally, an essential GTPase that binds both GDP and GTP, with rapid nucleotide exchange. Plays a role in 16S rRNA processing and 30S ribosomal subunit biogenesis and possibly also in cell cycle regulation and energy metabolism. The protein is GTPase Era of Streptococcus pneumoniae (strain P1031).